Consider the following 45-residue polypeptide: Photosystem II reaction center protein K (45 aa).

A propeptide spanning residues 1-8 (MNSALFLA) is cleaved from the precursor. A helical transmembrane segment spans residues 23–43 (ILPVIPVFFLLLAFVWQAAIG).

This sequence belongs to the PsbK family. PSII is composed of 1 copy each of membrane proteins PsbA, PsbB, PsbC, PsbD, PsbE, PsbF, PsbH, PsbI, PsbJ, PsbK, PsbL, PsbM, PsbT, PsbX, PsbY, PsbZ, Psb30/Ycf12, at least 3 peripheral proteins of the oxygen-evolving complex and a large number of cofactors. It forms dimeric complexes.

Its subcellular location is the plastid. The protein resides in the chloroplast thylakoid membrane. One of the components of the core complex of photosystem II (PSII). PSII is a light-driven water:plastoquinone oxidoreductase that uses light energy to abstract electrons from H(2)O, generating O(2) and a proton gradient subsequently used for ATP formation. It consists of a core antenna complex that captures photons, and an electron transfer chain that converts photonic excitation into a charge separation. The protein is Photosystem II reaction center protein K of Pyropia yezoensis (Susabi-nori).